We begin with the raw amino-acid sequence, 74 residues long: Small ribosomal subunit protein uS8c (74 aa).

This sequence belongs to the universal ribosomal protein uS8 family. In terms of assembly, part of the 30S ribosomal subunit.

The protein resides in the plastid. Its subcellular location is the chloroplast. In terms of biological role, one of the primary rRNA binding proteins, it binds directly to 16S rRNA central domain where it helps coordinate assembly of the platform of the 30S subunit. The sequence is that of Small ribosomal subunit protein uS8c (rps8) from Oenothera ammophila (Evening primerose).